Reading from the N-terminus, the 542-residue chain is Probable myosin-binding protein 6 (542 aa).

A signal peptide spans 1–21 (MYIQLLCFFLFLFLLLQATMS). A helical transmembrane segment spans residues 39 to 59 (FLIYTVLEWSLIVFLFIDGVI). Residues 219-239 (SFLAPAPSPRVSHNKLSENES) are disordered. One can recognise a GTD-binding domain in the interval 300–398 (SILNQLKKEV…ELEAEFEVYR (99 aa)). The disordered stretch occupies residues 419–480 (GNASAYDDCQ…DEEKGSESKE (62 aa)). A compositionally biased stretch (polar residues) spans 437–456 (AVSSSNQQENGENIDQNGQS). The span at 471 to 480 (DEEKGSESKE) shows a compositional bias: basic and acidic residues.

It is found in the membrane. Functionally, probable membrane-anchored myosin receptors. This chain is Probable myosin-binding protein 6, found in Arabidopsis thaliana (Mouse-ear cress).